The primary structure comprises 146 residues: Globin-1 (146 aa).

The Globin domain maps to 9-146; sequence QLTADVKKDL…KLVAVVQAAL (138 aa). Heme b is bound at residue H101.

It belongs to the globin family. In terms of assembly, homodimer.

It localises to the cytoplasm. This Anadara inaequivalvis (Inequivalve ark) protein is Globin-1.